The sequence spans 158 residues: UPF0225 protein Pput_1155 (158 aa).

The protein belongs to the UPF0225 family.

The sequence is that of UPF0225 protein Pput_1155 from Pseudomonas putida (strain ATCC 700007 / DSM 6899 / JCM 31910 / BCRC 17059 / LMG 24140 / F1).